Here is a 99-residue protein sequence, read N- to C-terminus: Putative type 4B encapsulin shell protein PF1875 (99 aa).

Belongs to the encapsulin family. Family 4B subfamily. May self-assemble into facets and potentially into larger complexes.

The protein resides in the encapsulin nanocompartment. Its function is as follows. May be the encapsulin shell protein in a type 4 A-domain encapsulin nanocompartment system. Its cargo may be upstream glyceraldehyde-3-phosphate dehydrogenase (AC P61879). In Pyrococcus furiosus (strain ATCC 43587 / DSM 3638 / JCM 8422 / Vc1), this protein is Putative type 4B encapsulin shell protein PF1875.